The following is a 552-amino-acid chain: 5'-AMP-activated protein kinase catalytic subunit alpha-2 (552 aa).

In terms of domain architecture, Protein kinase spans 16-268; the sequence is YVLGDTLGVG…IKDIREHEWF (253 aa). ATP is bound by residues 22–30 and Lys-45; that span reads LGVGTFGKV. The Proton acceptor role is filled by Asp-139. Position 172 is a phosphothreonine; by LKB1 and CaMKK2 (Thr-172). At Thr-258 the chain carries Phosphothreonine. An AIS region spans residues 291 to 376; the sequence is EAVKEVCEKF…PERMPPLIAD (86 aa). Residues Ser-377 and Ser-491 each carry the phosphoserine modification.

Belongs to the protein kinase superfamily. CAMK Ser/Thr protein kinase family. SNF1 subfamily. As to quaternary structure, AMPK is a heterotrimer of an alpha catalytic subunit (PRKAA1 or PRKAA2), a beta (PRKAB1 or PRKAB2) and a gamma non-catalytic subunits (PRKAG1, PRKAG2 or PRKAG3). Interacts with FNIP1 and FNIP2. Interacts with DUSP29. Interacts with ARF6. The phosphorylated form at Thr-172 mediated by CamKK2 interacts with ACSS2. The cofactor is Mg(2+). Ubiquitinated. In terms of processing, phosphorylated at Thr-172 by STK11/LKB1 in complex with STE20-related adapter-alpha (STRADA) pseudo kinase and CAB39. Also phosphorylated at Thr-172 by CAMKK2; triggered by a rise in intracellular calcium ions, without detectable changes in the AMP/ATP ratio. CAMKK1 can also phosphorylate Thr-172, but at much lower level. Dephosphorylated by protein phosphatase 2A and 2C (PP2A and PP2C). Phosphorylated by ULK1; leading to negatively regulate AMPK activity and suggesting the existence of a regulatory feedback loop between ULK1 and AMPK. Dephosphorylated by PPM1A and PPM1B at Thr-172 (mediated by STK11/LKB1).

The protein localises to the cytoplasm. Its subcellular location is the nucleus. It catalyses the reaction L-seryl-[protein] + ATP = O-phospho-L-seryl-[protein] + ADP + H(+). The enzyme catalyses L-threonyl-[protein] + ATP = O-phospho-L-threonyl-[protein] + ADP + H(+). It carries out the reaction L-seryl-[acetyl-CoA carboxylase] + ATP = O-phospho-L-seryl-[acetyl-CoA carboxylase] + ADP + H(+). The catalysed reaction is L-seryl-[3-hydroxy-3-methylglutaryl-coenzyme A reductase] + ATP = O-phospho-L-seryl-[3-hydroxy-3-methylglutaryl-coenzyme A reductase] + ADP + H(+). With respect to regulation, activated by phosphorylation on Thr-172. Binding of AMP to non-catalytic gamma subunit (PRKAG1, PRKAG2 or PRKAG3) results in allosteric activation, inducing phosphorylation on Thr-172. AMP-binding to gamma subunit also sustains activity by preventing dephosphorylation of Thr-172. ADP also stimulates Thr-172 phosphorylation, without stimulating already phosphorylated AMPK. ATP promotes dephosphorylation of Thr-172, rendering the enzyme inactive. Under physiological conditions AMPK mainly exists in its inactive form in complex with ATP, which is much more abundant than AMP. Selectively inhibited by compound C (6-[4-(2-Piperidin-1-yl-ethoxy)-phenyl)]-3-pyridin-4-yl-pyyrazolo[1,5-a] pyrimidine. Activated by resveratrol, a natural polyphenol present in red wine, and S17834, a synthetic polyphenol. Salicylate/aspirin directly activates kinase activity, primarily by inhibiting Thr-172 dephosphorylation. Catalytic subunit of AMP-activated protein kinase (AMPK), an energy sensor protein kinase that plays a key role in regulating cellular energy metabolism. In response to reduction of intracellular ATP levels, AMPK activates energy-producing pathways and inhibits energy-consuming processes: inhibits protein, carbohydrate and lipid biosynthesis, as well as cell growth and proliferation. AMPK acts via direct phosphorylation of metabolic enzymes, and by longer-term effects via phosphorylation of transcription regulators. Regulates lipid synthesis by phosphorylating and inactivating lipid metabolic enzymes such as ACACA, ACACB, GYS1, HMGCR and LIPE; regulates fatty acid and cholesterol synthesis by phosphorylating acetyl-CoA carboxylase (ACACA and ACACB) and hormone-sensitive lipase (LIPE) enzymes, respectively. Promotes lipolysis of lipid droplets by mediating phosphorylation of isoform 1 of CHKA (CHKalpha2). Regulates insulin-signaling and glycolysis by phosphorylating IRS1, PFKFB2 and PFKFB3. Involved in insulin receptor/INSR internalization. AMPK stimulates glucose uptake in muscle by increasing the translocation of the glucose transporter SLC2A4/GLUT4 to the plasma membrane, possibly by mediating phosphorylation of TBC1D4/AS160. Regulates transcription and chromatin structure by phosphorylating transcription regulators involved in energy metabolism such as CRTC2/TORC2, FOXO3, histone H2B, HDAC5, MEF2C, MLXIPL/ChREBP, EP300, HNF4A, p53/TP53, SREBF1, SREBF2 and PPARGC1A. Acts as a key regulator of glucose homeostasis in liver by phosphorylating CRTC2/TORC2, leading to CRTC2/TORC2 sequestration in the cytoplasm. In response to stress, phosphorylates 'Ser-36' of histone H2B (H2BS36ph), leading to promote transcription. Acts as a key regulator of cell growth and proliferation by phosphorylating FNIP1, TSC2, RPTOR, WDR24 and ATG1/ULK1: in response to nutrient limitation, negatively regulates the mTORC1 complex by phosphorylating RPTOR component of the mTORC1 complex and by phosphorylating and activating TSC2. Also phosphorylates and inhibits GATOR2 subunit WDR24 in response to nutrient limitation, leading to suppress glucose-mediated mTORC1 activation. In response to energetic stress, phosphorylates FNIP1, inactivating the non-canonical mTORC1 signaling, thereby promoting nuclear translocation of TFEB and TFE3, and inducing transcription of lysosomal or autophagy genes. In response to nutrient limitation, promotes autophagy by phosphorylating and activating ATG1/ULK1. In that process, it also activates WDR45/WIPI4. Phosphorylates CASP6, thereby preventing its autoprocessing and subsequent activation. AMPK also acts as a regulator of circadian rhythm by mediating phosphorylation of CRY1, leading to destabilize it. May regulate the Wnt signaling pathway by phosphorylating CTNNB1, leading to stabilize it. Also acts as a regulator of cellular polarity by remodeling the actin cytoskeleton; probably by indirectly activating myosin. Also phosphorylates CFTR, EEF2K, KLC1, NOS3 and SLC12A1. Plays an important role in the differential regulation of pro-autophagy (composed of PIK3C3, BECN1, PIK3R4 and UVRAG or ATG14) and non-autophagy (composed of PIK3C3, BECN1 and PIK3R4) complexes, in response to glucose starvation. Can inhibit the non-autophagy complex by phosphorylating PIK3C3 and can activate the pro-autophagy complex by phosphorylating BECN1. Upon glucose starvation, promotes ARF6 activation in a kinase-independent manner leading to cell migration. Upon glucose deprivation mediates the phosphorylation of ACSS2 at 'Ser-659', which exposes the nuclear localization signal of ACSS2, required for its interaction with KPNA1 and nuclear translocation. Upon stress, regulates mitochondrial fragmentation through phosphorylation of MTFR1L. The polypeptide is 5'-AMP-activated protein kinase catalytic subunit alpha-2 (Mus musculus (Mouse)).